The primary structure comprises 213 residues: Adenylate kinase (213 aa).

Residue 10–15 participates in ATP binding; sequence GSGKGS. The segment at 30–60 is NMP; it reads STGNLFRAILKEDSELARKIKEINVSGGKLV. AMP contacts are provided by residues Thr-31, Arg-36, 58–60, 87–90, and Gln-94; these read KLV and GYPR. Residues 123–160 are LID; sequence GRWMCPKCAGIYNIHFKKPQVHGLCDNDQATLYQRADD. Arg-124 contributes to the ATP binding site. The Zn(2+) site is built by Cys-127 and Cys-130. 133–134 provides a ligand contact to ATP; that stretch reads IY. Zn(2+)-binding residues include Cys-147 and Asp-150. AMP contacts are provided by Arg-157 and Arg-168. Position 196 (Gln-196) interacts with ATP.

It belongs to the adenylate kinase family. As to quaternary structure, monomer.

It localises to the cytoplasm. It catalyses the reaction AMP + ATP = 2 ADP. The protein operates within purine metabolism; AMP biosynthesis via salvage pathway; AMP from ADP: step 1/1. In terms of biological role, catalyzes the reversible transfer of the terminal phosphate group between ATP and AMP. Plays an important role in cellular energy homeostasis and in adenine nucleotide metabolism. The polypeptide is Adenylate kinase (Ureaplasma parvum serovar 3 (strain ATCC 27815 / 27 / NCTC 11736)).